The chain runs to 83 residues: Cytochrome b559 subunit alpha (83 aa).

A helical transmembrane segment spans residues valine 21–tryptophan 35. Position 23 (histidine 23) interacts with heme.

Belongs to the PsbE/PsbF family. Heterodimer of an alpha subunit and a beta subunit. PSII is composed of 1 copy each of membrane proteins PsbA, PsbB, PsbC, PsbD, PsbE, PsbF, PsbH, PsbI, PsbJ, PsbK, PsbL, PsbM, PsbT, PsbX, PsbY, PsbZ, Psb30/Ycf12, at least 3 peripheral proteins of the oxygen-evolving complex and a large number of cofactors. It forms dimeric complexes. Requires heme b as cofactor.

It localises to the plastid. The protein localises to the chloroplast thylakoid membrane. Functionally, this b-type cytochrome is tightly associated with the reaction center of photosystem II (PSII). PSII is a light-driven water:plastoquinone oxidoreductase that uses light energy to abstract electrons from H(2)O, generating O(2) and a proton gradient subsequently used for ATP formation. It consists of a core antenna complex that captures photons, and an electron transfer chain that converts photonic excitation into a charge separation. In Zygnema circumcarinatum (Green alga), this protein is Cytochrome b559 subunit alpha.